Reading from the N-terminus, the 84-residue chain is Apovitellenin-1 (84 aa).

Belongs to the apovitellenin family. Monomer.

Functionally, protein component of the very low density lipoprotein (VLDL) of egg-laying females. Potent lipoprotein lipase inhibitor, preventing the loss of triglycerides from VLDL on their way from the liver to the growing oocytes. The chain is Apovitellenin-1 from Dromaius novaehollandiae (Emu).